We begin with the raw amino-acid sequence, 721 residues long: Fatty acid oxidation complex subunit alpha (721 aa).

Positions 1 to 190 are enoyl-CoA hydratase/isomerase; the sequence is MIYEGKAITV…KVGVVDAIVA (190 aa). Asp-297 lines the substrate pocket. The tract at residues 312 to 721 is 3-hydroxyacyl-CoA dehydrogenase; that stretch reads RDVKQAAVLG…SFFGQASSEV (410 aa). NAD(+) contacts are provided by residues Met-325, Asp-344, 401 to 403, Lys-408, and Ser-430; that span reads VVE. Catalysis depends on His-451, which acts as the For 3-hydroxyacyl-CoA dehydrogenase activity. Asn-454 is an NAD(+) binding site. The substrate site is built by Asn-501 and Tyr-660.

The protein in the N-terminal section; belongs to the enoyl-CoA hydratase/isomerase family. This sequence in the C-terminal section; belongs to the 3-hydroxyacyl-CoA dehydrogenase family. As to quaternary structure, heterotetramer of two alpha chains (FadB) and two beta chains (FadA).

It catalyses the reaction a (3S)-3-hydroxyacyl-CoA + NAD(+) = a 3-oxoacyl-CoA + NADH + H(+). The catalysed reaction is a (3S)-3-hydroxyacyl-CoA = a (2E)-enoyl-CoA + H2O. The enzyme catalyses a 4-saturated-(3S)-3-hydroxyacyl-CoA = a (3E)-enoyl-CoA + H2O. It carries out the reaction (3S)-3-hydroxybutanoyl-CoA = (3R)-3-hydroxybutanoyl-CoA. It catalyses the reaction a (3Z)-enoyl-CoA = a 4-saturated (2E)-enoyl-CoA. The catalysed reaction is a (3E)-enoyl-CoA = a 4-saturated (2E)-enoyl-CoA. It participates in lipid metabolism; fatty acid beta-oxidation. In terms of biological role, involved in the aerobic and anaerobic degradation of long-chain fatty acids via beta-oxidation cycle. Catalyzes the formation of 3-oxoacyl-CoA from enoyl-CoA via L-3-hydroxyacyl-CoA. It can also use D-3-hydroxyacyl-CoA and cis-3-enoyl-CoA as substrate. This chain is Fatty acid oxidation complex subunit alpha, found in Pseudomonas syringae pv. tomato (strain ATCC BAA-871 / DC3000).